Consider the following 345-residue polypeptide: S-adenosylmethionine:tRNA ribosyltransferase-isomerase (345 aa).

It belongs to the QueA family. Monomer.

The protein localises to the cytoplasm. It carries out the reaction 7-aminomethyl-7-carbaguanosine(34) in tRNA + S-adenosyl-L-methionine = epoxyqueuosine(34) in tRNA + adenine + L-methionine + 2 H(+). The protein operates within tRNA modification; tRNA-queuosine biosynthesis. Transfers and isomerizes the ribose moiety from AdoMet to the 7-aminomethyl group of 7-deazaguanine (preQ1-tRNA) to give epoxyqueuosine (oQ-tRNA). The sequence is that of S-adenosylmethionine:tRNA ribosyltransferase-isomerase from Aromatoleum aromaticum (strain DSM 19018 / LMG 30748 / EbN1) (Azoarcus sp. (strain EbN1)).